The sequence spans 645 residues: Threonine--tRNA ligase (645 aa).

The TGS domain maps to 1–61 (MPVITLPDGS…SDDAKLSIIT (61 aa)). The segment at 243–534 (DHRKLGKKLD…LIEDTEGAFP (292 aa)) is catalytic. 3 residues coordinate Zn(2+): C334, H385, and H511.

It belongs to the class-II aminoacyl-tRNA synthetase family. As to quaternary structure, homodimer. The cofactor is Zn(2+).

It localises to the cytoplasm. It carries out the reaction tRNA(Thr) + L-threonine + ATP = L-threonyl-tRNA(Thr) + AMP + diphosphate + H(+). Catalyzes the attachment of threonine to tRNA(Thr) in a two-step reaction: L-threonine is first activated by ATP to form Thr-AMP and then transferred to the acceptor end of tRNA(Thr). Also edits incorrectly charged L-seryl-tRNA(Thr). The protein is Threonine--tRNA ligase of Marinomonas sp. (strain MWYL1).